A 516-amino-acid polypeptide reads, in one-letter code: Anthranilate synthase component 1 (516 aa).

L-tryptophan is bound by residues S56 and 283-285 (PYM). 324 to 325 (GT) is a binding site for chorismate. Mg(2+) is bound at residue E351. Residues Y439, R459, 473-475 (GGG), and G475 each bind chorismate. Mg(2+) is bound at residue E488.

It belongs to the anthranilate synthase component I family. Heterotetramer consisting of two non-identical subunits: a beta subunit (TrpG) and a large alpha subunit (TrpE). Mg(2+) serves as cofactor.

It carries out the reaction chorismate + L-glutamine = anthranilate + pyruvate + L-glutamate + H(+). It participates in amino-acid biosynthesis; L-tryptophan biosynthesis; L-tryptophan from chorismate: step 1/5. Its activity is regulated as follows. Feedback inhibited by tryptophan. In terms of biological role, part of a heterotetrameric complex that catalyzes the two-step biosynthesis of anthranilate, an intermediate in the biosynthesis of L-tryptophan. In the first step, the glutamine-binding beta subunit (TrpG) of anthranilate synthase (AS) provides the glutamine amidotransferase activity which generates ammonia as a substrate that, along with chorismate, is used in the second step, catalyzed by the large alpha subunit of AS (TrpE) to produce anthranilate. In the absence of TrpG, TrpE can synthesize anthranilate directly from chorismate and high concentrations of ammonia. This Mycobacterium bovis (strain ATCC BAA-935 / AF2122/97) protein is Anthranilate synthase component 1 (trpE).